A 426-amino-acid polypeptide reads, in one-letter code: Tol-Pal system protein TolB (426 aa).

The N-terminal stretch at 1-24 is a signal peptide; sequence MKLKSRFTSIIGVITLFFSQTVTA.

Belongs to the TolB family. In terms of assembly, the Tol-Pal system is composed of five core proteins: the inner membrane proteins TolA, TolQ and TolR, the periplasmic protein TolB and the outer membrane protein Pal. They form a network linking the inner and outer membranes and the peptidoglycan layer.

It localises to the periplasm. Its function is as follows. Part of the Tol-Pal system, which plays a role in outer membrane invagination during cell division and is important for maintaining outer membrane integrity. The chain is Tol-Pal system protein TolB from Actinobacillus pleuropneumoniae serotype 3 (strain JL03).